A 1724-amino-acid chain; its full sequence is Protein CHROMATIN REMODELING 5 (1724 aa).

Disordered stretches follow at residues 24–88 (QNAA…QSST) and 104–415 (DCQP…DDIE). Residues 25 to 34 (NAATFQSSPL) are compositionally biased toward polar residues. Over residues 126–144 (EAYHSEDNHSNDRSEKLDS) the composition is skewed to basic and acidic residues. A coiled-coil region spans residues 138–164 (RSEKLDSENENDNENEEEDNEMNKHQS). Acidic residues-rich tracts occupy residues 145-157 (ENEN…EEDN), 170-186 (PADE…DEDN), 239-264 (ADMD…DAAD), and 278-297 (VSDE…YEDD). The segment covering 301–313 (KKPKVRQQSKGFR) has biased composition (basic residues). Residues 320 to 327 (ERKSFHVS) carry the Nuclear localization signal 1 motif. A compositionally biased stretch (acidic residues) spans 337–350 (QDDDSEEDSENDND). A compositionally biased stretch (polar residues) spans 362–376 (TLRQNNGRSTNTIGQ). The segment covering 403–412 (DGKNRKNQKD) has biased composition (basic and acidic residues). A Chromo 1 domain is found at 420–499 (DVIEKVLWHQ…FKKVLNYTKK (80 aa)). A coiled-coil region spans residues 505–525 (RYRTALSREEIEVNDVSKEMD). Residues 533-597 (SQVERIIADR…REVSIAVQGK (65 aa)) form the Chromo 2 domain. Positions 637-809 (VNSWLNDTNV…WALLHFLDPG (173 aa)) constitute a Helicase ATP-binding domain. 650-657 (DEMGLGKT) is an ATP binding site. A DEAH box motif is present at residues 760 to 763 (DEAH). The Helicase C-terminal domain occupies 943-1094 (ILDKLLVRLR…HLVIQKLNAE (152 aa)). A coiled-coil region spans residues 1126 to 1163 (KEDKNDEESKKRLLSMDIDEILERAEQVEEKHTDETEH). Residues 1199-1245 (ALAPRAARNTKSYVDPSHPDRTSKRKKKGSEPPEHTERSQKRRKTEY) are disordered. Short sequence motifs (nuclear localization signal) lie at residues 1224-1231 (KKKGSEPP) and 1348-1355 (LKRVQGLQ). Residues 1227 to 1237 (GSEPPEHTERS) show a composition bias toward basic and acidic residues. Disordered stretches follow at residues 1480 to 1524 (QFKA…EMSD) and 1654 to 1724 (KFKT…FPPR). A compositionally biased stretch (basic and acidic residues) spans 1504 to 1520 (DGPRKTQKAEPLVKEEG). Residues 1658–1667 (AGNSQGSQQV) are compositionally biased toward polar residues. Positions 1669-1691 (KGIDTAKFEAWKRRRRTENDVQT) are enriched in basic and acidic residues. A compositionally biased stretch (polar residues) spans 1692-1702 (ERPTITNSNSL).

Belongs to the SNF2/RAD54 helicase family.

Its subcellular location is the nucleus. In terms of biological role, DNA-binding helicase that specifically binds to the promoter of target genes, leading to chromatin remodeling, possibly by promoting deposition of histone H3.3. Probable chromatin remodeling factor. The sequence is that of Protein CHROMATIN REMODELING 5 from Arabidopsis thaliana (Mouse-ear cress).